A 339-amino-acid polypeptide reads, in one-letter code: Anthranilate phosphoribosyltransferase (339 aa).

Residues G80, 83–84, T88, 90–93, 108–116, and S120 contribute to the 5-phospho-alpha-D-ribose 1-diphosphate site; these read GD, NIST, and KHGNRAVSS. G80 is a binding site for anthranilate. S92 serves as a coordination point for Mg(2+). N111 lines the anthranilate pocket. Residue R166 coordinates anthranilate. D225 and E226 together coordinate Mg(2+).

This sequence belongs to the anthranilate phosphoribosyltransferase family. As to quaternary structure, homodimer. Mg(2+) is required as a cofactor.

The catalysed reaction is N-(5-phospho-beta-D-ribosyl)anthranilate + diphosphate = 5-phospho-alpha-D-ribose 1-diphosphate + anthranilate. Its pathway is amino-acid biosynthesis; L-tryptophan biosynthesis; L-tryptophan from chorismate: step 2/5. Catalyzes the transfer of the phosphoribosyl group of 5-phosphorylribose-1-pyrophosphate (PRPP) to anthranilate to yield N-(5'-phosphoribosyl)-anthranilate (PRA). The protein is Anthranilate phosphoribosyltransferase of Caldanaerobacter subterraneus subsp. tengcongensis (strain DSM 15242 / JCM 11007 / NBRC 100824 / MB4) (Thermoanaerobacter tengcongensis).